Reading from the N-terminus, the 207-residue chain is Small ribosomal subunit protein uS4 (207 aa).

Residues 97–160 form the S4 RNA-binding domain; the sequence is SRLDNVVYRM…KKQARIVEAL (64 aa).

It belongs to the universal ribosomal protein uS4 family. In terms of assembly, part of the 30S ribosomal subunit. Contacts protein S5. The interaction surface between S4 and S5 is involved in control of translational fidelity.

In terms of biological role, one of the primary rRNA binding proteins, it binds directly to 16S rRNA where it nucleates assembly of the body of the 30S subunit. With S5 and S12 plays an important role in translational accuracy. This Burkholderia mallei (strain NCTC 10247) protein is Small ribosomal subunit protein uS4.